Here is a 115-residue protein sequence, read N- to C-terminus: Large ribosomal subunit protein bL31B (115 aa).

Belongs to the bacterial ribosomal protein bL31 family. Type B subfamily. In terms of assembly, part of the 50S ribosomal subunit.

The sequence is that of Large ribosomal subunit protein bL31B from Polynucleobacter asymbioticus (strain DSM 18221 / CIP 109841 / QLW-P1DMWA-1) (Polynucleobacter necessarius subsp. asymbioticus).